The primary structure comprises 94 residues: Large ribosomal subunit protein eL42 (94 aa).

Residues C11, C14, C71, and C74 each contribute to the Zn(2+) site. A C4-type zinc finger spans residues 11–74 (CPYCKRHTIH…LDLRFVCTVC (64 aa)).

The protein belongs to the eukaryotic ribosomal protein eL42 family. Part of the 50S ribosomal subunit. Zn(2+) serves as cofactor.

Binds to the 23S rRNA. This is Large ribosomal subunit protein eL42 from Pyrococcus horikoshii (strain ATCC 700860 / DSM 12428 / JCM 9974 / NBRC 100139 / OT-3).